The primary structure comprises 439 residues: sn-glycerol-3-phosphate-binding periplasmic protein UgpB (439 aa).

An N-terminal signal peptide occupies residues 1–25 (MFNNSIHKVSICIALTLTFSANAMA). Tyr-67, Glu-91, Ser-146, Ser-272, Gly-309, Tyr-348, and Arg-399 together coordinate sn-glycerol 3-phosphate.

The protein belongs to the bacterial solute-binding protein 1 family. In terms of assembly, the complex is composed of two ATP-binding proteins (UgpC), two transmembrane proteins (UgpA and UgpE) and a solute-binding protein (UgpB).

Its subcellular location is the periplasm. Part of the ABC transporter complex UgpBAEC involved in sn-glycerol-3-phosphate (G3P) import. Binds G3P. This is sn-glycerol-3-phosphate-binding periplasmic protein UgpB (ugpB) from Yersinia pestis bv. Antiqua (strain Antiqua).